The following is a 380-amino-acid chain: Cytochrome b (380 aa).

Helical transmembrane passes span 33–53 (FGSLLGLCLATQILTGLFLAM), 77–98 (WLIRNIHANGASFFFICIYMHI), 113–133 (WNIGVVLLLLTMMTAFVGYVL), and 178–198 (FFAFHFLFPFVIAAATVLHLL). Positions 83 and 97 each coordinate heme b. His182 and His196 together coordinate heme b. His201 contacts a ubiquinone. Transmembrane regions (helical) follow at residues 226 to 246 (YKDLLGFVAMLLGLTSLALFA), 288 to 308 (LGGVLALLFSILVLMVVPILH), 320 to 340 (LTQFLFWALVADMLILTWIGG), and 347 to 367 (FIIIGQVASVIYFTIFLVLSP).

The protein belongs to the cytochrome b family. In terms of assembly, the cytochrome bc1 complex contains 3 respiratory subunits (MT-CYB, CYC1 and UQCRFS1), 2 core proteins (UQCRC1 and UQCRC2) and probably 6 low-molecular weight proteins. Heme b serves as cofactor.

It localises to the mitochondrion inner membrane. Its function is as follows. Component of the ubiquinol-cytochrome c reductase complex (complex III or cytochrome b-c1 complex) that is part of the mitochondrial respiratory chain. The b-c1 complex mediates electron transfer from ubiquinol to cytochrome c. Contributes to the generation of a proton gradient across the mitochondrial membrane that is then used for ATP synthesis. This chain is Cytochrome b (mt-cyb), found in Oncorhynchus mykiss (Rainbow trout).